A 334-amino-acid polypeptide reads, in one-letter code: MNEDPKVNLSGLPRDCIDAGAPENISAAVPSQGSVAESEPELVVNPWDIVLCSSGTLICCENAVVVLIIFHSPSLRAPMFLLIGSLALADLLAGLGLIINFVFAYLLQSEATKLVTIGLIVASFSASVCSLLAITVDRYLSLYYALTYHSERTVTFTYVMLVMLWGTSICLGLLPVMGWNCLRDESTCSVVRPLTKNNAAILSISFLFMFALMLQLYIQICKIVMRHAHQIALQHHFLATSHYVTTRKGVSTLALILGTFAACWMPFTLYSLIADYTYPSIYTYATLLPATYNSIINPVIYAFRNQEIQKALCLICCGCIPSSLSQRARSPSDV.

Topologically, residues 1–48 are extracellular; sequence MNEDPKVNLSGLPRDCIDAGAPENISAAVPSQGSVAESEPELVVNPWD. N8 and N24 each carry an N-linked (GlcNAc...) asparagine glycan. Residues 49–69 traverse the membrane as a helical segment; that stretch reads IVLCSSGTLICCENAVVVLII. Residues 70–78 are Cytoplasmic-facing; that stretch reads FHSPSLRAP. Residues 79-99 traverse the membrane as a helical segment; it reads MFLLIGSLALADLLAGLGLII. Residues 100–113 lie on the Extracellular side of the membrane; that stretch reads NFVFAYLLQSEATK. A helical membrane pass occupies residues 114 to 134; the sequence is LVTIGLIVASFSASVCSLLAI. Residues 135–158 are Cytoplasmic-facing; it reads TVDRYLSLYYALTYHSERTVTFTY. Residues 159 to 179 form a helical membrane-spanning segment; the sequence is VMLVMLWGTSICLGLLPVMGW. Topologically, residues 180–199 are extracellular; that stretch reads NCLRDESTCSVVRPLTKNNA. A helical membrane pass occupies residues 200-220; it reads AILSISFLFMFALMLQLYIQI. Over 221–252 the chain is Cytoplasmic; it reads CKIVMRHAHQIALQHHFLATSHYVTTRKGVST. The helical transmembrane segment at 253–273 threads the bilayer; sequence LALILGTFAACWMPFTLYSLI. Over 274-282 the chain is Extracellular; sequence ADYTYPSIY. The chain crosses the membrane as a helical span at residues 283 to 303; it reads TYATLLPATYNSIINPVIYAF. The Cytoplasmic segment spans residues 304–334; that stretch reads RNQEIQKALCLICCGCIPSSLSQRARSPSDV. A lipid anchor (S-palmitoyl cysteine) is attached at C317. A phosphoserine mark is found at S330 and S332.

Belongs to the G-protein coupled receptor 1 family. As to expression, expressed predominantly in the forebrain and a lesser extent in the hindbrain. Lower expression in the liver.

It localises to the cell membrane. In terms of biological role, receptor with constitutive G(s) signaling activity that stimulates cyclic AMP production. Promotes neurite outgrowth and blocks myelin inhibition in neurons. The protein is G-protein coupled receptor 12 (Gpr12) of Mus musculus (Mouse).